A 431-amino-acid chain; its full sequence is MGNNIKVTFNPDKIAAWWPAVGTYYTTTYPQNQSVFQPGIYQTTSLINPKNQQELDSVLINRYKQIDWNTWQGFPVDQKLPLVSRDPPPKPYINQSAQTFEIKPGPIIVPGIRDIPRGLVPPQTPTNRDQGRKPTPPTPPLRDTHPHLTMKNQTFHLQGFVDGLRDLTTTERQHNAYGDPFTTLSPAVPTVSTILSPPSTTGDPALSPEMSPSSLLGLLAGLQVVYFLWTKILTIAQNLDWWWTSLSFPGGIPECTGQNSQFQTCKHLPTSCPPTCNGFRWMYLRRFIIYLLVLLLCLIFLLVLLDWKGLIPVCPLQPTTETTVNCRQCTISAQDMYTPPYCCCLKPTAGNCTCWPIPSSWALGNYLWEWALARFSWLNLLVPLLQWLGGISLIAWFLLIWMIWFWGPALLSILPPFIPIFVLFFLIWVYI.

Gly2 carries N-myristoyl glycine; by host lipidation. The tract at residues 2-148 (GNNIKVTFNP…PPLRDTHPHL (147 aa)) is pre-S1. The segment at 2 to 207 (GNNIKVTFNP…PSTTGDPALS (206 aa)) is pre-S. The Virion surface; in external conformation segment spans residues 2 to 214 (GNNIKVTFNP…ALSPEMSPSS (213 aa)). Over 2 to 286 (GNNIKVTFNP…NGFRWMYLRR (285 aa)) the chain is Intravirion; in internal conformation. Asn3 is a glycosylation site (N-linked (GlcNAc...) asparagine). The disordered stretch occupies residues 115-147 (IPRGLVPPQTPTNRDQGRKPTPPTPPLRDTHPH). Residues 149–207 (TMKNQTFHLQGFVDGLRDLTTTERQHNAYGDPFTTLSPAVPTVSTILSPPSTTGDPALS) are pre-S2. A helical transmembrane segment spans residues 215–235 (LLGLLAGLQVVYFLWTKILTI). At 236–286 (AQNLDWWWTSLSFPGGIPECTGQNSQFQTCKHLPTSCPPTCNGFRWMYLRR) the chain is on the intravirion; in external conformation side. The helical transmembrane segment at 287 to 307 (FIIYLLVLLLCLIFLLVLLDW) threads the bilayer. Over 308-379 (KGLIPVCPLQ…WALARFSWLN (72 aa)) the chain is Virion surface. N-linked (GlcNAc...) asparagine; by host glycosylation occurs at Asn351. The helical transmembrane segment at 380 to 400 (LLVPLLQWLGGISLIAWFLLI) threads the bilayer. Residues 401–406 (WMIWFW) are Intravirion-facing. Residues 407 to 429 (GPALLSILPPFIPIFVLFFLIWV) traverse the membrane as a helical segment. Residues 430–431 (YI) lie on the Virion surface side of the membrane.

It belongs to the orthohepadnavirus major surface antigen family. In terms of assembly, in its internal form (Li-HBsAg), interacts with the capsid protein and with the isoform S. Interacts with host chaperone CANX. Associates with host chaperone CANX through its pre-S2 N glycan; this association may be essential for isoform M proper secretion. As to quaternary structure, interacts with isoform L. Interacts with the antigens of satellite virus HDV (HDVAgs); this interaction is required for encapsidation of HDV genomic RNA. Isoform M is N-terminally acetylated by host at a ratio of 90%, and N-glycosylated by host at the pre-S2 region. Post-translationally, myristoylated.

It is found in the virion membrane. In terms of biological role, the large envelope protein exists in two topological conformations, one which is termed 'external' or Le-HBsAg and the other 'internal' or Li-HBsAg. In its external conformation the protein attaches the virus to cell receptors and thereby initiating infection. This interaction determines the species specificity and liver tropism. This attachment induces virion internalization predominantly through caveolin-mediated endocytosis. The large envelope protein also assures fusion between virion membrane and endosomal membrane. In its internal conformation the protein plays a role in virion morphogenesis and mediates the contact with the nucleocapsid like a matrix protein. The middle envelope protein plays an important role in the budding of the virion. It is involved in the induction of budding in a nucleocapsid independent way. In this process the majority of envelope proteins bud to form subviral lipoprotein particles of 22 nm of diameter that do not contain a nucleocapsid. The polypeptide is Large envelope protein (Woodchuck hepatitis B virus (isolate 7) (WHV)).